The primary structure comprises 498 residues: N-succinylglutamate 5-semialdehyde dehydrogenase 1 (498 aa).

NAD(+) is bound at residue 231-236 (GSSNTG). Residues glutamate 254 and cysteine 288 contribute to the active site.

This sequence belongs to the aldehyde dehydrogenase family. AstD subfamily.

The enzyme catalyses N-succinyl-L-glutamate 5-semialdehyde + NAD(+) + H2O = N-succinyl-L-glutamate + NADH + 2 H(+). It functions in the pathway amino-acid degradation; L-arginine degradation via AST pathway; L-glutamate and succinate from L-arginine: step 4/5. Its function is as follows. Catalyzes the NAD-dependent reduction of succinylglutamate semialdehyde into succinylglutamate. In Shewanella denitrificans (strain OS217 / ATCC BAA-1090 / DSM 15013), this protein is N-succinylglutamate 5-semialdehyde dehydrogenase 1.